The following is a 767-amino-acid chain: Cullin-1 (767 aa).

One can recognise a Cullin neddylation domain in the interval Asp699–Arg760. Lys713 participates in a covalent cross-link: Glycyl lysine isopeptide (Lys-Gly) (interchain with G-Cter in NEDD8).

It belongs to the cullin family. In terms of assembly, component of multiple Cul1-RING E3 ubiquitin-protein ligase complexes commonly known as SCF (SKP1-CUL1-F-box) complexes, consisting of cul1, skp1, pip1 and a variable F-box domain-containing protein as substrate-specific subunit. Binds to the pop1 homodimer, the pop2 homodimer and the pop1/pop2 heterodimer forming the SCF(pop1-pop2) complex. Interacts with pof3, pof14 and skp1. In terms of processing, neddylated; enhancing the ubiquitin-ligase activity.

Its subcellular location is the cytoplasm. It functions in the pathway protein modification; protein ubiquitination. In terms of biological role, core component of multiple cullin-RING-based SCF (SKP1-CUL1-F-box protein) E3 ubiquitin-protein ligase complexes, which mediate the ubiquitination of target proteins. The functional specificity of the SCF complex depends on the F-box protein as substrate recognition component. SCF(pop1-pop2) is required for the maintenance of ploidy and directs ubiquitination of cig2. The polypeptide is Cullin-1 (cul1) (Schizosaccharomyces pombe (strain 972 / ATCC 24843) (Fission yeast)).